The chain runs to 250 residues: MTIKEIKELLKGDVSEEEIANLEKDSRSGVQKLLISYRKKQKKLFEKKQAFLERFLYEKQFWQKGQLVAGVDEVGRGPLAGPVVTAAVIIDQDFDLLDVNDSKKLSPEKRLKLYPKILEEAVSVAVGVKNAQVIDQINIYEADRQAMAQAVNALDIKPDALLVDAMNVPVDLPQIELIKGDAKSNSIAAASIVAKVFRDKLMDDYDKIYPHYGFSRNAGYGTKEHIDALKQYGPTHIHRKTFAPVSDFFK.

Residues 66–250 (QLVAGVDEVG…TFAPVSDFFK (185 aa)) enclose the RNase H type-2 domain. The a divalent metal cation site is built by Asp-72, Glu-73, and Asp-164.

This sequence belongs to the RNase HII family. Mn(2+) is required as a cofactor. Mg(2+) serves as cofactor.

The protein localises to the cytoplasm. The enzyme catalyses Endonucleolytic cleavage to 5'-phosphomonoester.. In terms of biological role, endonuclease that specifically degrades the RNA of RNA-DNA hybrids. This is Ribonuclease HII from Lactobacillus acidophilus (strain ATCC 700396 / NCK56 / N2 / NCFM).